We begin with the raw amino-acid sequence, 266 residues long: Hydroxyethylthiazole kinase (266 aa).

M43 contributes to the substrate binding site. Residues R119 and T166 each coordinate ATP. G193 serves as a coordination point for substrate.

This sequence belongs to the Thz kinase family. It depends on Mg(2+) as a cofactor.

It catalyses the reaction 5-(2-hydroxyethyl)-4-methylthiazole + ATP = 4-methyl-5-(2-phosphooxyethyl)-thiazole + ADP + H(+). It participates in cofactor biosynthesis; thiamine diphosphate biosynthesis; 4-methyl-5-(2-phosphoethyl)-thiazole from 5-(2-hydroxyethyl)-4-methylthiazole: step 1/1. Catalyzes the phosphorylation of the hydroxyl group of 4-methyl-5-beta-hydroxyethylthiazole (THZ). This chain is Hydroxyethylthiazole kinase, found in Methanococcus maripaludis (strain C7 / ATCC BAA-1331).